Reading from the N-terminus, the 452-residue chain is Isocitrate dehydrogenase [NADP], mitochondrial (452 aa).

A mitochondrion-targeting transit peptide spans 1 to 39 (MAGYLRVVRSLCRASGSGSAWAPAALTAPNLQEQPRRHY). N6-acetyllysine is present on residues K45, K48, K67, and K69. 2 positions are modified to N6-acetyllysine; alternate: K80 and K106. K80 and K106 each carry N6-succinyllysine; alternate. NADP(+) is bound by residues 115-117 (TIT) and R122. T117 serves as a coordination point for D-threo-isocitrate. Residues 134 to 140 (SPNGTIR) and R149 contribute to the D-threo-isocitrate site. Residue K155 is modified to N6-acetyllysine. An N6-acetyllysine; alternate modification is found at K166. K166 is subject to N6-succinyllysine; alternate. R172 lines the D-threo-isocitrate pocket. K180 and K193 each carry N6-acetyllysine; alternate. Residues K180 and K193 each carry the N6-succinyllysine; alternate modification. Residue K199 is modified to N6-acetyllysine. At K256 the chain carries N6-acetyllysine; alternate. K256 carries the post-translational modification N6-succinyllysine; alternate. N6-acetyllysine occurs at positions 263, 272, 275, and 280. Position 282 is an N6-acetyllysine; alternate (K282). K282 carries the post-translational modification N6-succinyllysine; alternate. Mn(2+) is bound at residue D291. K299 is a binding site for NADP(+). Mn(2+) is bound at residue D314. Residues 349-354 (GTVTRH) and N367 contribute to the NADP(+) site. N6-acetyllysine; alternate is present on K384. K384 carries the N6-succinyllysine; alternate modification. N6-acetyllysine is present on residues K400, K413, and K442.

This sequence belongs to the isocitrate and isopropylmalate dehydrogenases family. Homodimer. Mg(2+) is required as a cofactor. The cofactor is Mn(2+). Acetylation at Lys-413 dramatically reduces catalytic activity. Deacetylated by SIRT3.

Its subcellular location is the mitochondrion. It catalyses the reaction D-threo-isocitrate + NADP(+) = 2-oxoglutarate + CO2 + NADPH. Functionally, plays a role in intermediary metabolism and energy production. It may tightly associate or interact with the pyruvate dehydrogenase complex. In Bos taurus (Bovine), this protein is Isocitrate dehydrogenase [NADP], mitochondrial (IDH2).